A 380-amino-acid chain; its full sequence is Chaperone protein DnaJ (380 aa).

Positions 5–69 constitute a J domain; that stretch reads DYYEILGVSK…QKRAHYDQFG (65 aa). The segment at 135-217 adopts a CR-type zinc-finger fold; sequence GKETDIEIPR…CGGTGRVKKR (83 aa). Positions 148, 151, 165, 168, 191, 194, 205, and 208 each coordinate Zn(2+). 4 CXXCXGXG motif repeats span residues 148-155, 165-172, 191-198, and 205-212; these read CDTCHGTG, CSYCHGTG, CPYCGGTG, and CTTCGGTG.

It belongs to the DnaJ family. As to quaternary structure, homodimer. Zn(2+) serves as cofactor.

Its subcellular location is the cytoplasm. In terms of biological role, participates actively in the response to hyperosmotic and heat shock by preventing the aggregation of stress-denatured proteins and by disaggregating proteins, also in an autonomous, DnaK-independent fashion. Unfolded proteins bind initially to DnaJ; upon interaction with the DnaJ-bound protein, DnaK hydrolyzes its bound ATP, resulting in the formation of a stable complex. GrpE releases ADP from DnaK; ATP binding to DnaK triggers the release of the substrate protein, thus completing the reaction cycle. Several rounds of ATP-dependent interactions between DnaJ, DnaK and GrpE are required for fully efficient folding. Also involved, together with DnaK and GrpE, in the DNA replication of plasmids through activation of initiation proteins. This Geobacillus sp. (strain WCH70) protein is Chaperone protein DnaJ.